A 499-amino-acid polypeptide reads, in one-letter code: Maturase K (499 aa).

Belongs to the intron maturase 2 family. MatK subfamily.

The protein localises to the plastid. It is found in the chloroplast. Usually encoded in the trnK tRNA gene intron. Probably assists in splicing its own and other chloroplast group II introns. This Neltuma juliflora (Mesquite) protein is Maturase K.